Here is a 57-residue protein sequence, read N- to C-terminus: MSEIKIKDNESLDNALRRFKKQCAKSGVMAEVRKREHYEKPSVKRKKKAEAARKKKF.

The interval 35–57 is disordered; the sequence is REHYEKPSVKRKKKAEAARKKKF. Basic residues predominate over residues 43–57; the sequence is VKRKKKAEAARKKKF.

It belongs to the bacterial ribosomal protein bS21 family.

The sequence is that of Small ribosomal subunit protein bS21 from Alkaliphilus metalliredigens (strain QYMF).